The sequence spans 246 residues: Transmembrane and ubiquitin-like domain-containing protein 1 (246 aa).

The tract at residues 2–30 (TLIEGVGDEVTVLFSVLACLLVLALAWVS) is required to release iHOPS from membranes. Residues 11–31 (VTVLFSVLACLLVLALAWVST) form a helical membrane-spanning segment. A disordered region spans residues 34–101 (AEGGDPLPQP…TPPAPDSPQE (68 aa)). Residues 40–50 (LPQPSGTPTPS) are compositionally biased toward pro residues. A Phosphothreonine modification is found at Thr-71. Ser-73 carries the phosphoserine modification. Residue Thr-92 is modified to Phosphothreonine. Phosphoserine occurs at positions 98 and 127. Residues 103 to 176 (LVLRLKFLND…LHCHVSTRVG (74 aa)) enclose the Ubiquitin-like domain. 2 consecutive transmembrane segments (helical) span residues 195–215 (IGSL…YCQI) and 221–241 (FPLT…LLAF).

As to quaternary structure, interacts with EEF1A1, GRIA2, GRIP1, CAMLG, TUBG1. Interacts with NPM1 and CDKN2A; TMUB1 can enhance interaction between NPM1 and CDKN2A and is proposed to bridge the proteins; proposed to be mediated by iHOPS. Interacts with ERLIN2 and AMFR; TMUB1 promotes the interaction of ERLIN2 with AMFR. In terms of processing, processed by regulated intramembrane proteolysis (RIP)in the N-terminus to release iHOPS from membranes. In terms of tissue distribution, ubiquitously expressed with highest levels in mammary and thyroid glands, bone marrow and spleen; limited expression in cardiac, pancreatic and ovarian tissues.

It localises to the membrane. Its subcellular location is the postsynaptic cell membrane. The protein localises to the recycling endosome. It is found in the cytoplasm. The protein resides in the nucleus. It localises to the nucleolus. Its subcellular location is the cytoskeleton. The protein localises to the microtubule organizing center. It is found in the centrosome. Its function is as follows. Involved in sterol-regulated ubiquitination and degradation of HMG-CoA reductase HMGCR. Involved in positive regulation of AMPA-selective glutamate receptor GRIA2 recycling to the cell surface. Acts as a negative regulator of hepatocyte growth during regeneration. May contribute to the regulation of translation during cell-cycle progression. May contribute to the regulation of cell proliferation. May be involved in centrosome assembly. Modulates stabilization and nucleolar localization of tumor suppressor CDKN2A and enhances association between CDKN2A and NPM1. In Homo sapiens (Human), this protein is Transmembrane and ubiquitin-like domain-containing protein 1 (TMUB1).